Consider the following 496-residue polypeptide: Probable CtpA-like serine protease (496 aa).

Residues 1–16 show a composition bias toward basic and acidic residues; the sequence is MDDKQHTSSSDDERAE. A disordered region spans residues 1–27; sequence MDDKQHTSSSDDERAEIATSNQDQQTN. Positions 18-27 are enriched in polar residues; it reads ATSNQDQQTN. Residues 39 to 59 traverse the membrane as a helical segment; the sequence is FISILIGTILITAVITVVAYI. The PDZ domain maps to 124–206; that stretch reads TKSFNEGVSG…TEVTLTVQRG (83 aa). Catalysis depends on charge relay system residues serine 329, aspartate 340, and lysine 354.

The protein belongs to the peptidase S41A family.

Its subcellular location is the cell membrane. The protein is Probable CtpA-like serine protease of Staphylococcus aureus (strain bovine RF122 / ET3-1).